The following is a 670-amino-acid chain: Extracellular matrix protein 2 (670 aa).

The first 19 residues, 1–19 (MKLAVLFCFILLIVLQTDC), serve as a signal peptide directing secretion. Residues 96 to 153 (GYCFVKGMIMYNKAVWSPEPCTTCLCSNGRVLCDETECHPKACPYTIKPEGECCPICS) form the VWFC domain. Residues 185–270 (SEEDEEIAEG…EEDAIRGDVF (86 aa)) form a disordered region. Basic and acidic residues predominate over residues 192–227 (AEGHKEHKKETSVPTKIHGDGERTERKLRPEKEGRS). A compositionally biased stretch (acidic residues) spans 241–263 (ESKEETEREGEEEEEEEEEEEED). The Cell attachment site motif lies at 266-268 (RGD). The 38-residue stretch at 278–315 (PGTPRGRPRLPRSCSLSYRTISCVHADFTEIPPITAPE) folds into the LRRNT domain. LRR repeat units follow at residues 339 to 359 (NLER…GPKA), 365 to 386 (KLMR…LPST), 387 to 407 (LEEL…SLSD), 410 to 430 (QLVT…DPLA), 436 to 456 (SLSY…GLPA), 457 to 478 (STEE…CFNH), 481 to 501 (KITM…APLA), 507 to 528 (NLES…LPKS), 529 to 549 (LLHL…VFGH), 553 to 573 (GLEY…DLVS), 580 to 601 (SLRE…IQDM), 603 to 624 (ALHF…QICN), and 632 to 655 (ALEH…AFSC). An N-linked (GlcNAc...) asparagine glycan is attached at asparagine 349. The N-linked (GlcNAc...) asparagine glycan is linked to asparagine 420. Residue asparagine 477 is glycosylated (N-linked (GlcNAc...) asparagine).

It belongs to the small leucine-rich proteoglycan (SLRP) family. SLRP class I subfamily. Interacts with numerous extracellular matrix proteins. Interacts with isoform 1 of MSL1. Interacts with isoform 3 of RASSF1.

Its subcellular location is the secreted. It localises to the extracellular space. The protein localises to the extracellular matrix. In terms of biological role, promotes matrix assembly and cell adhesiveness. The polypeptide is Extracellular matrix protein 2 (Ecm2) (Mus musculus (Mouse)).